We begin with the raw amino-acid sequence, 968 residues long: RNA polymerase-associated protein RapA (968 aa).

A Helicase ATP-binding domain is found at 164–334 (DVGRRHAPRV…FARLRLLDPN (171 aa)). 177 to 184 (DEVGLGKT) provides a ligand contact to ATP. Residues 280-283 (DEAH) carry the DEAH box motif. The region spanning 490-662 (RVEWLMGYLT…YLASPDQTEG (173 aa)) is the Helicase C-terminal domain.

The protein belongs to the SNF2/RAD54 helicase family. RapA subfamily. As to quaternary structure, interacts with the RNAP. Has a higher affinity for the core RNAP than for the holoenzyme. Its ATPase activity is stimulated by binding to RNAP.

Functionally, transcription regulator that activates transcription by stimulating RNA polymerase (RNAP) recycling in case of stress conditions such as supercoiled DNA or high salt concentrations. Probably acts by releasing the RNAP, when it is trapped or immobilized on tightly supercoiled DNA. Does not activate transcription on linear DNA. Probably not involved in DNA repair. The chain is RNA polymerase-associated protein RapA from Escherichia coli O139:H28 (strain E24377A / ETEC).